The following is a 284-amino-acid chain: Probable 3-mercaptopyruvate sulfurtransferase (284 aa).

Rhodanese domains lie at 17-138 (SEPD…ALTN) and 168-281 (GQPG…RPVA). Substrate is bound at residue R182. The active-site Cysteine persulfide intermediate is the C241. Residues 241–247 (CGSGVTA) are substrate specificity.

It localises to the cytoplasm. The catalysed reaction is 2-oxo-3-sulfanylpropanoate + [thioredoxin]-dithiol = [thioredoxin]-disulfide + hydrogen sulfide + pyruvate + H(+). Its function is as follows. Catalyzes the transfer of sulfur from 3-mercaptopyruvate to a thiol-containing acceptor to form an intramolecular disulfide releasing hydrogen sulfide and pyruvate. This Pseudomonas aeruginosa (strain ATCC 15692 / DSM 22644 / CIP 104116 / JCM 14847 / LMG 12228 / 1C / PRS 101 / PAO1) protein is Probable 3-mercaptopyruvate sulfurtransferase (sseA).